The chain runs to 434 residues: Trigger factor (434 aa).

The PPIase FKBP-type domain occupies 161-246 (KDIVTIDFKG…IHKVEEPQLP (86 aa)).

This sequence belongs to the FKBP-type PPIase family. Tig subfamily.

It is found in the cytoplasm. It catalyses the reaction [protein]-peptidylproline (omega=180) = [protein]-peptidylproline (omega=0). Functionally, involved in protein export. Acts as a chaperone by maintaining the newly synthesized protein in an open conformation. Functions as a peptidyl-prolyl cis-trans isomerase. This Marinobacter nauticus (strain ATCC 700491 / DSM 11845 / VT8) (Marinobacter aquaeolei) protein is Trigger factor.